The primary structure comprises 390 residues: Protein PIN-LIKES 3 (390 aa).

Residues 1 to 14 (MVKLLELFITSSKP) lie on the Lumenal side of the membrane. The chain crosses the membrane as a helical span at residues 15 to 35 (VVEILLITSVGFYMALDGVNL). At 36–43 (LGHDARKY) the chain is on the cytoplasmic side. The chain crosses the membrane as a helical span at residues 44–61 (LNNIVFYVFSPSLIGSRL). At 62 to 76 (ADSVTYESLVKMWFM) the chain is on the lumenal side. Residues 77 to 97 (PVNVLLTFIIGSLLGWIVIVI) form a helical membrane-spanning segment. Residues 98–107 (TKPPSHLRGL) lie on the Cytoplasmic side of the membrane. A helical transmembrane segment spans residues 108-128 (ILGCCAAGNLGNMPLIIIPAV). Residues 129–144 (CKEKGGPFGDPESCQK) lie on the Lumenal side of the membrane. The chain crosses the membrane as a helical span at residues 145–165 (YGMGYVALSMAMGSIYIWTYV). Residues 166–227 (YNLMRVLSNS…SLSQKVNLKT (62 aa)) are Cytoplasmic-facing. Residues 228-248 (IFAPSTIAAMIALVIGLITPL) form a helical membrane-spanning segment. At 249–265 (RKLIIGTEAPLRVLQDS) the chain is on the lumenal side. Residues 266 to 286 (VTLVGDGAVPAMTMIIGGNLL) form a helical membrane-spanning segment. At 287-297 (KGLRSSGMKMS) the chain is on the cytoplasmic side. The helical transmembrane segment at 298–318 (SIIGVLVARYVLLPMSGVLIV) threads the bilayer. At 319-331 (RGAYKLDLVTSEP) the chain is on the lumenal side. The chain crosses the membrane as a helical span at residues 332–352 (LYQFVLLLQYAVPPAMNLGTI). The Cytoplasmic portion of the chain corresponds to 353–364 (TQLFGTGESECS). A helical membrane pass occupies residues 365–385 (VIMLWTYSLASIALTVWPTFF). The Lumenal segment spans residues 386 to 390 (MWLVA).

Belongs to the auxin efflux carrier (TC 2.A.69.2) family. Expressed in seedlings, rosette and cauline leaves, flowers and siliques.

The protein localises to the endoplasmic reticulum membrane. Involved in cellular auxin homeostasis by regulating auxin metabolism. Regulates intracellular auxin accumulation at the endoplasmic reticulum and thus auxin availability for nuclear auxin signaling. The protein is Protein PIN-LIKES 3 (PILS3) of Arabidopsis thaliana (Mouse-ear cress).